We begin with the raw amino-acid sequence, 243 residues long: Collagen triple helix repeat-containing protein 1 (243 aa).

Residues 1 to 30 (MRPQGPAASPQRLRGLLLLLLLQLPAPSSA) form the signal peptide. Residues 57–90 (QGPAGVPGRDGSPGANGIPGTPGIPGRDGFKGEK) enclose the Collagen-like domain. The disordered stretch occupies residues 62–85 (VPGRDGSPGANGIPGTPGIPGRDG). N186 carries an N-linked (GlcNAc...) asparagine glycan.

Post-translationally, N-glycosylated. In terms of tissue distribution, isoform 1 is expressed in calcified atherosclerotic plaque and chondrocyte-like cells.

The protein localises to the secreted. It localises to the extracellular space. The protein resides in the extracellular matrix. Its function is as follows. May act as a negative regulator of collagen matrix deposition. In Homo sapiens (Human), this protein is Collagen triple helix repeat-containing protein 1 (CTHRC1).